The primary structure comprises 192 residues: Protein GrpE (192 aa).

Basic and acidic residues predominate over residues 1–20 (MEERNEQVVEEVKEEVKEAQ). The disordered stretch occupies residues 1 to 34 (MEERNEQVVEEVKEEVKEAQVEEAVTSEDSEETV). Residues 25–34 (VTSEDSEETV) show a composition bias toward acidic residues.

The protein belongs to the GrpE family. As to quaternary structure, homodimer.

The protein localises to the cytoplasm. Its function is as follows. Participates actively in the response to hyperosmotic and heat shock by preventing the aggregation of stress-denatured proteins, in association with DnaK and GrpE. It is the nucleotide exchange factor for DnaK and may function as a thermosensor. Unfolded proteins bind initially to DnaJ; upon interaction with the DnaJ-bound protein, DnaK hydrolyzes its bound ATP, resulting in the formation of a stable complex. GrpE releases ADP from DnaK; ATP binding to DnaK triggers the release of the substrate protein, thus completing the reaction cycle. Several rounds of ATP-dependent interactions between DnaJ, DnaK and GrpE are required for fully efficient folding. In Bacillus cereus (strain AH187), this protein is Protein GrpE.